Here is a 526-residue protein sequence, read N- to C-terminus: tRNA modification GTPase MSS1, mitochondrial (526 aa).

The N-terminal 19 residues, 1–19 (MNSASFLQSRLISRSFLVR), are a transit peptide targeting the mitochondrion. Residues 274-444 (GIKLVLLGAP…LISTLTSNFE (171 aa)) enclose the TrmE-type G domain. GTP is bound by residues 281-288 (GAPNVGKS), 328-332 (DTAGI), and 394-397 (NKSD).

The protein belongs to the TRAFAC class TrmE-Era-EngA-EngB-Septin-like GTPase superfamily. TrmE GTPase family. In terms of assembly, forms a heterodimer with MTO1.

It localises to the mitochondrion. GTPase involved in the 5-carboxymethylaminomethyl modification (mnm(5)s(2)U34) of the wobble uridine base in mitochondrial tRNAs. Involved in the expression of cytochrome c oxidase subunit 1 (COX1). Works in association with the small subunit of mitoribosomes. The chain is tRNA modification GTPase MSS1, mitochondrial (MSS1) from Saccharomyces cerevisiae (strain ATCC 204508 / S288c) (Baker's yeast).